The following is a 128-amino-acid chain: Secreted RxLR effector protein 57 (128 aa).

An N-terminal signal peptide occupies residues 1 to 31; that stretch reads MHRKRLRVVLSATLLDLITCVQLMLDPLVRS. A RxLR motif is present at residues 58–61; it reads RILR.

This sequence belongs to the RxLR effector family.

Its subcellular location is the secreted. It localises to the host nucleus. The protein localises to the host cytoplasm. Its function is as follows. Secreted effector that completely suppresses the host cell death induced by cell death-inducing proteins. This Plasmopara viticola (Downy mildew of grapevine) protein is Secreted RxLR effector protein 57.